The primary structure comprises 488 residues: Bifunctional protein HldE (488 aa).

The ribokinase stretch occupies residues 1–330; the sequence is MDRKSIESIF…NAVALAHSDS (330 aa). 205-208 is an ATP binding site; the sequence is NRRE. The active site involves D275. Residues 356-488 form a cytidylyltransferase region; the sequence is FTNGCFDLLH…IIERVLERYS (133 aa).

This sequence in the N-terminal section; belongs to the carbohydrate kinase PfkB family. In the C-terminal section; belongs to the cytidylyltransferase family. In terms of assembly, homodimer.

The enzyme catalyses D-glycero-beta-D-manno-heptose 7-phosphate + ATP = D-glycero-beta-D-manno-heptose 1,7-bisphosphate + ADP + H(+). It carries out the reaction D-glycero-beta-D-manno-heptose 1-phosphate + ATP + H(+) = ADP-D-glycero-beta-D-manno-heptose + diphosphate. It functions in the pathway nucleotide-sugar biosynthesis; ADP-L-glycero-beta-D-manno-heptose biosynthesis; ADP-L-glycero-beta-D-manno-heptose from D-glycero-beta-D-manno-heptose 7-phosphate: step 1/4. It participates in nucleotide-sugar biosynthesis; ADP-L-glycero-beta-D-manno-heptose biosynthesis; ADP-L-glycero-beta-D-manno-heptose from D-glycero-beta-D-manno-heptose 7-phosphate: step 3/4. Its function is as follows. Catalyzes the phosphorylation of D-glycero-D-manno-heptose 7-phosphate at the C-1 position to selectively form D-glycero-beta-D-manno-heptose-1,7-bisphosphate. Catalyzes the ADP transfer from ATP to D-glycero-beta-D-manno-heptose 1-phosphate, yielding ADP-D-glycero-beta-D-manno-heptose. This chain is Bifunctional protein HldE, found in Pelobacter propionicus (strain DSM 2379 / NBRC 103807 / OttBd1).